Reading from the N-terminus, the 787-residue chain is Protein FAM149A (787 aa).

Disordered stretches follow at residues 22 to 105 (SPAV…SSGA), 144 to 175 (GSNS…APGP), 189 to 226 (EEWT…PTNF), 238 to 284 (ASES…SWRD), 432 to 455 (DGDE…GLPP), 573 to 602 (LQQR…ASSR), and 665 to 697 (AVQT…SYRG). The segment covering 37 to 46 (SVDSGASTSL) has biased composition (polar residues). 2 stretches are compositionally biased toward low complexity: residues 51 to 65 (TLTL…TAAS) and 96 to 105 (SGSLPSSSGA). Over residues 144-155 (GSNSVTASSPRN) the composition is skewed to polar residues. Over residues 189–200 (EEWTSDSDSQDD) the composition is skewed to acidic residues. Over residues 201 to 220 (PEGRGLSEGLRKQSSEKSKD) the composition is skewed to basic and acidic residues. Over residues 239-250 (SESPSSFSSSGS) the composition is skewed to low complexity. Positions 251–261 (RTPTEAHNSWP) are enriched in polar residues. A compositionally biased stretch (low complexity) spans 262 to 274 (GSSTQSSTTGLST).

Belongs to the FAM149 family.

The polypeptide is Protein FAM149A (Fam149a) (Mus musculus (Mouse)).